The chain runs to 473 residues: ATP synthase subunit beta (473 aa).

158-165 serves as a coordination point for ATP; sequence GGAGVGKT.

This sequence belongs to the ATPase alpha/beta chains family. As to quaternary structure, F-type ATPases have 2 components, CF(1) - the catalytic core - and CF(0) - the membrane proton channel. CF(1) has five subunits: alpha(3), beta(3), gamma(1), delta(1), epsilon(1). CF(0) has three main subunits: a(1), b(2) and c(9-12). The alpha and beta chains form an alternating ring which encloses part of the gamma chain. CF(1) is attached to CF(0) by a central stalk formed by the gamma and epsilon chains, while a peripheral stalk is formed by the delta and b chains.

The protein resides in the cell membrane. It catalyses the reaction ATP + H2O + 4 H(+)(in) = ADP + phosphate + 5 H(+)(out). Its function is as follows. Produces ATP from ADP in the presence of a proton gradient across the membrane. The catalytic sites are hosted primarily by the beta subunits. This Geobacillus sp. (strain WCH70) protein is ATP synthase subunit beta.